An 890-amino-acid chain; its full sequence is Alanine--tRNA ligase (890 aa).

Zn(2+) is bound by residues H573, H577, C676, and H680.

The protein belongs to the class-II aminoacyl-tRNA synthetase family. Zn(2+) serves as cofactor.

The protein resides in the cytoplasm. The catalysed reaction is tRNA(Ala) + L-alanine + ATP = L-alanyl-tRNA(Ala) + AMP + diphosphate. Functionally, catalyzes the attachment of alanine to tRNA(Ala) in a two-step reaction: alanine is first activated by ATP to form Ala-AMP and then transferred to the acceptor end of tRNA(Ala). Also edits incorrectly charged Ser-tRNA(Ala) and Gly-tRNA(Ala) via its editing domain. The polypeptide is Alanine--tRNA ligase (Corynebacterium efficiens (strain DSM 44549 / YS-314 / AJ 12310 / JCM 11189 / NBRC 100395)).